Here is a 341-residue protein sequence, read N- to C-terminus: Cytoplasmic tRNA 2-thiolation protein 1 (341 aa).

Belongs to the TtcA family. CTU1/NCS6/ATPBD3 subfamily.

The protein localises to the cytoplasm. It participates in tRNA modification; 5-methoxycarbonylmethyl-2-thiouridine-tRNA biosynthesis. Functionally, plays a central role in 2-thiolation of mcm(5)S(2)U at tRNA wobble positions of tRNA(Lys), tRNA(Glu) and tRNA(Gln). Directly binds tRNAs and probably acts by catalyzing adenylation of tRNAs, an intermediate required for 2-thiolation. It is unclear whether it acts as a sulfurtransferase that transfers sulfur from thiocarboxylated URM1 onto the uridine of tRNAs at wobble position. The polypeptide is Cytoplasmic tRNA 2-thiolation protein 1 (Aedes aegypti (Yellowfever mosquito)).